The sequence spans 465 residues: Cysteine--tRNA ligase (465 aa).

Residue Cys-27 coordinates Zn(2+). A 'HIGH' region motif is present at residues 29 to 39 (PTVYDDAHLGH). Residues Cys-207, His-237, and Glu-241 each contribute to the Zn(2+) site. Residues 269–273 (KMSKS) carry the 'KMSKS' region motif. Lys-272 serves as a coordination point for ATP.

The protein belongs to the class-I aminoacyl-tRNA synthetase family. As to quaternary structure, monomer. Zn(2+) serves as cofactor.

Its subcellular location is the cytoplasm. It catalyses the reaction tRNA(Cys) + L-cysteine + ATP = L-cysteinyl-tRNA(Cys) + AMP + diphosphate. This chain is Cysteine--tRNA ligase (cysS), found in Helicobacter pylori (strain ATCC 700392 / 26695) (Campylobacter pylori).